The primary structure comprises 295 residues: Protoheme IX farnesyltransferase 2 (295 aa).

Transmembrane regions (helical) follow at residues 9–29 (ITKP…FFLA), 36–56 (LAIF…GCVF), 85–105 (VALV…YYVA), 108–128 (LAAL…SLYL), 135–155 (GTLV…VAVS), 163–183 (LTLL…IAIF), 209–229 (ILLY…SGYA), 230–250 (GMSY…MAWT), and 263–283 (KLFV…SVDF).

The protein belongs to the UbiA prenyltransferase family. Protoheme IX farnesyltransferase subfamily.

It is found in the cell inner membrane. The enzyme catalyses heme b + (2E,6E)-farnesyl diphosphate + H2O = Fe(II)-heme o + diphosphate. The protein operates within porphyrin-containing compound metabolism; heme O biosynthesis; heme O from protoheme: step 1/1. Converts heme B (protoheme IX) to heme O by substitution of the vinyl group on carbon 2 of heme B porphyrin ring with a hydroxyethyl farnesyl side group. The polypeptide is Protoheme IX farnesyltransferase 2 (Pseudomonas fluorescens (strain ATCC BAA-477 / NRRL B-23932 / Pf-5)).